Consider the following 723-residue polypeptide: Cyclin-T2 (723 aa).

Residues 1–298 form an interaction with MDFIC and MDFI region; the sequence is MASGRGASSR…SVTGVPANPS (298 aa). Positions 12 to 147 constitute a Cyclin N-terminal domain; sequence FFTREQLENT…IMLQTLGFEI (136 aa). The interaction with POLR2A stretch occupies residues 250-298; that stretch reads RLKRIRNWRAMAKKPKVDGQVSETPLLGSSLVQNSILVDSVTGVPANPS. Composition is skewed to polar residues over residues 297 to 307 and 314 to 325; these read PSFQKPSTSTF and NSGSTSVQDSRA. Disordered stretches follow at residues 297 to 325, 340 to 364, 385 to 428, and 458 to 645; these read PSFQ…DSRA, SYSL…VYTQ, ALHS…GMLP, and AEQQ…SSVK. Over residues 395–409 the composition is skewed to basic and acidic residues; that stretch reads DKVADHSSAKQEYTH. K404 is covalently cross-linked (Glycyl lysine isopeptide (Lys-Gly) (interchain with G-Cter in SUMO2)). S477 is modified (phosphoserine). 3 stretches are compositionally biased toward basic and acidic residues: residues 489 to 503, 517 to 543, and 552 to 565; these read DRPE…ERSG, GPSK…EGSG, and ISRD…EHPA. The segment covering 566–576 has biased composition (basic residues); it reads NRHHSSHKYLH. A Phosphoserine modification is found at S596. Low complexity predominate over residues 631–645; it reads SSKSAGSSSSSSSVK.

It belongs to the cyclin family. Cyclin C subfamily. In terms of assembly, interacts with CDK9 to form P-TEFb. Interacts with POLR2A (via the C-terminal domain (CTD)); mediates transcriptional activity. Interacts with HEXIM1; mediates formation of a tripartite complex with KPNA2. Interacts with HEXIM2. Interacts with PKN1; enhances MYOD1-dependent transcription. P-TEFB complex interacts with RB1; promotes phosphorylation of RB1. P-TEFB complex interacts with MYOD1; promotes the transcriptional activity of MYOD1 through its CDK9-mediated phosphorylation. Interacts with MDFI and MDFIC. As to expression, highly expressed in all phases of skeletal muscle differentiation, particularly in later stages. Highly expressed in skeletal muscle. Significantly expressed in heart, brain, kidney, liver, testis, and pancreas.

It localises to the cytoplasm. Its subcellular location is the perinuclear region. It is found in the nucleus. Its function is as follows. Regulatory subunit of the cyclin-dependent kinase pair (CDK9/cyclin T) complex, also called positive transcription elongation factor B (P-TEFB), which is proposed to facilitate the transition from abortive to production elongation by phosphorylating the CTD (carboxy-terminal domain) of the large subunit of RNA polymerase II (RNAP II). The activity of this complex is regulated by binding with 7SK snRNA. Plays a role during muscle differentiation; P-TEFB complex interacts with MYOD1; this tripartite complex promotes the transcriptional activity of MYOD1 through its CDK9-mediated phosphorylation and binds the chromatin of promoters and enhancers of muscle-specific genes; this event correlates with hyperphosphorylation of the CTD domain of RNA pol II. In addition, enhances MYOD1-dependent transcription through interaction with PKN1. Involved in early embryo development. This is Cyclin-T2 from Mus musculus (Mouse).